The sequence spans 222 residues: Probable fructose-6-phosphate aldolase (222 aa).

Lys87 serves as the catalytic Schiff-base intermediate with substrate.

It belongs to the transaldolase family. Type 3A subfamily.

The protein localises to the cytoplasm. The catalysed reaction is beta-D-fructose 6-phosphate = dihydroxyacetone + D-glyceraldehyde 3-phosphate. Its function is as follows. Catalyzes the reversible formation of fructose 6-phosphate from dihydroxyacetone and D-glyceraldehyde 3-phosphate via an aldolization reaction. The sequence is that of Probable fructose-6-phosphate aldolase from Streptococcus pneumoniae (strain ATCC 700669 / Spain 23F-1).